The primary structure comprises 341 residues: Ferrochelatase (341 aa).

2 residues coordinate Fe cation: histidine 189 and glutamate 293.

This sequence belongs to the ferrochelatase family.

It is found in the cytoplasm. The catalysed reaction is heme b + 2 H(+) = protoporphyrin IX + Fe(2+). Its pathway is porphyrin-containing compound metabolism; protoheme biosynthesis; protoheme from protoporphyrin-IX: step 1/1. In terms of biological role, catalyzes the ferrous insertion into protoporphyrin IX. The protein is Ferrochelatase of Stutzerimonas stutzeri (strain A1501) (Pseudomonas stutzeri).